Consider the following 500-residue polypeptide: MHSIIFKAAVALLGVSTAAGFSYQNSRLCLKLLAQGVEVDLPNSTDYETEQQNYWSTACTALRPDCIIAPKNARDMSRAVAAIQESKTTRFAIKSGGHSPNQLFSSIHDGVLISTRNLKQITYNEHTQTAVLGPGLKWEEAVGGLKDKGQTVVGGRLGGIGVGGLILGGGLSFLSGQYGWATNNVVNFEVVLANGTIVNANATSNPDLYAVMKGGSGNFGIVTAFTVKTHTQDPEIWGGSMFFDGNHTESLTRAIRDFAEYNTDDKASIIGTVNRNPSLIWVVFLTYDGPSPPEDVFRNFTQIPNIRNTVKRQSYHSLMLANDEYIRHGNRFSIGAETSVNPSGTHGYDIFKSFIDHWNDVTDDFIDIPGSASSLALQPLPRSISTKAKESGGDVAGFDPRYDYLLLQIAVSWNSSTSDSVIEAATRKYYTVQGDMIKQFTNEGKLPKAYCPLYLNDLNANQDFWGRVAPSTREKALAVRRAVDPTLFFQNRVTGGFRLG.

A signal peptide spans 1-20 (MHSIIFKAAVALLGVSTAAG). An N-linked (GlcNAc...) asparagine glycan is attached at Asn43. Residues 60-232 (TALRPDCIIA…TAFTVKTHTQ (173 aa)) form the FAD-binding PCMH-type domain. His98 is subject to Pros-8alpha-FAD histidine. N-linked (GlcNAc...) asparagine glycosylation is found at Asn194, Asn201, Asn246, Asn299, and Asn414.

The protein belongs to the oxygen-dependent FAD-linked oxidoreductase family. FAD serves as cofactor.

It is found in the secreted. This is an uncharacterized protein from Arthroderma benhamiae (strain ATCC MYA-4681 / CBS 112371) (Trichophyton mentagrophytes).